Here is a 206-residue protein sequence, read N- to C-terminus: MATAAMLCAARALRPRSWIPGTCQAQVRHTHQRASLLSFWELIPMRAEPLRKKKKVDPRKDQAAKDRLKKRIRKLERASQELVPIEDFITPVRFLDKSRQRPQEEHSFEESERRALLLKRWALYKQQEHEMERDAIRAMLEAQQEALEQLKLESTELYAEAIKRDTSLFPFEKEGPHYTPPVPNYQAPEGRYNDITKVYTQVEFKR.

The transit peptide at 1–46 (MATAAMLCAARALRPRSWIPGTCQAQVRHTHQRASLLSFWELIPMR) directs the protein to the mitochondrion. The tract at residues 170-190 (PFEKEGPHYTPPVPNYQAPEG) is disordered.

It belongs to the mitochondrion-specific ribosomal protein mL40 family. As to quaternary structure, component of the mitochondrial ribosome large subunit (39S) which comprises a 16S rRNA and about 50 distinct proteins.

It localises to the mitochondrion. This chain is Large ribosomal subunit protein mL40 (Mrpl40), found in Rattus norvegicus (Rat).